The chain runs to 156 residues: Cyanate hydratase (156 aa).

Residues Arg-96, Glu-99, and Ser-122 contribute to the active site.

Belongs to the cyanase family.

It carries out the reaction cyanate + hydrogencarbonate + 3 H(+) = NH4(+) + 2 CO2. Functionally, catalyzes the reaction of cyanate with bicarbonate to produce ammonia and carbon dioxide. The chain is Cyanate hydratase from Pseudomonas aeruginosa (strain UCBPP-PA14).